The sequence spans 393 residues: Methyltransferase-like protein 22 (393 aa).

Residues 54 to 87 (WTDSGAEDSGPTDVSTEEMPPAGSGSGHSHEDLS) are disordered. Serine 120 is subject to Phosphoserine.

It belongs to the methyltransferase superfamily. METTL22 family. Interacts with members of the heat shock protein 90 and 70 families; these proteins probably are methylation substrates.

The protein localises to the nucleus. It carries out the reaction L-lysyl-[protein] + 3 S-adenosyl-L-methionine = N(6),N(6),N(6)-trimethyl-L-lysyl-[protein] + 3 S-adenosyl-L-homocysteine + 3 H(+). Functionally, protein N-lysine methyltransferase. Trimethylates KIN at Lys-135 (in vitro). The polypeptide is Methyltransferase-like protein 22 (Mettl22) (Mus musculus (Mouse)).